The primary structure comprises 219 residues: Oxaloacetate tautomerase YcgM (219 aa).

Mg(2+)-binding residues include Glu70, Glu72, and Asp101.

Belongs to the FAH family. A divalent metal cation serves as cofactor.

It carries out the reaction oxaloacetate = enol-oxaloacetate. Functionally, tautomerase that converts enol-oxaloacetate to the keto form of oxaloacetate. This Escherichia coli (strain K12) protein is Oxaloacetate tautomerase YcgM.